The primary structure comprises 127 residues: Large ribosomal subunit protein bL19 (127 aa).

It belongs to the bacterial ribosomal protein bL19 family.

Functionally, this protein is located at the 30S-50S ribosomal subunit interface and may play a role in the structure and function of the aminoacyl-tRNA binding site. The chain is Large ribosomal subunit protein bL19 from Bradyrhizobium sp. (strain BTAi1 / ATCC BAA-1182).